A 413-amino-acid chain; its full sequence is Serine hydroxymethyltransferase (413 aa).

(6S)-5,6,7,8-tetrahydrofolate contacts are provided by residues Leu117 and 121–123 (GHL). Lys226 carries the post-translational modification N6-(pyridoxal phosphate)lysine. (6S)-5,6,7,8-tetrahydrofolate is bound by residues Glu239 and 349–351 (SPF).

This sequence belongs to the SHMT family. In terms of assembly, homodimer. Pyridoxal 5'-phosphate is required as a cofactor.

Its subcellular location is the cytoplasm. The enzyme catalyses (6R)-5,10-methylene-5,6,7,8-tetrahydrofolate + glycine + H2O = (6S)-5,6,7,8-tetrahydrofolate + L-serine. Its pathway is one-carbon metabolism; tetrahydrofolate interconversion. It functions in the pathway amino-acid biosynthesis; glycine biosynthesis; glycine from L-serine: step 1/1. In terms of biological role, catalyzes the reversible interconversion of serine and glycine with tetrahydrofolate (THF) serving as the one-carbon carrier. This reaction serves as the major source of one-carbon groups required for the biosynthesis of purines, thymidylate, methionine, and other important biomolecules. Also exhibits THF-independent aldolase activity toward beta-hydroxyamino acids, producing glycine and aldehydes, via a retro-aldol mechanism. This Bacillus cytotoxicus (strain DSM 22905 / CIP 110041 / 391-98 / NVH 391-98) protein is Serine hydroxymethyltransferase.